Reading from the N-terminus, the 128-residue chain is Lymphocyte antigen 6D (128 aa).

Residues 1–20 form the signal peptide; that stretch reads MKTVLLFLVALAAAAGPAQA. The 88-residue stretch at 21-108 folds into the UPAR/Ly6 domain; sequence LRCHVCTSSS…WQSAAPARTS (88 aa). Intrachain disulfides connect C23/C45, C26/C32, C38/C63, C67/C86, and C87/C92. A lipid anchor (GPI-anchor amidated serine) is attached at S98. Positions 99–128 are cleaved as a propeptide — removed in mature form; that stretch reads WQSAAPARTSAHLGLALACGLLALLWAPGL.

It localises to the cell membrane. Functionally, may act as a specification marker at earliest stage specification of lymphocytes between B- and T-cell development. Marks the earliest stage of B-cell specification. This Bos taurus (Bovine) protein is Lymphocyte antigen 6D (LY6D).